The sequence spans 427 residues: Enolase (427 aa).

(2R)-2-phosphoglycerate is bound at residue Q163. E205 serves as the catalytic Proton donor. Mg(2+)-binding residues include D242, E285, and D312. (2R)-2-phosphoglycerate-binding residues include K337, R366, S367, and K388. The active-site Proton acceptor is K337.

Belongs to the enolase family. Requires Mg(2+) as cofactor.

Its subcellular location is the cytoplasm. It is found in the secreted. It localises to the cell surface. It catalyses the reaction (2R)-2-phosphoglycerate = phosphoenolpyruvate + H2O. The protein operates within carbohydrate degradation; glycolysis; pyruvate from D-glyceraldehyde 3-phosphate: step 4/5. Functionally, catalyzes the reversible conversion of 2-phosphoglycerate (2-PG) into phosphoenolpyruvate (PEP). It is essential for the degradation of carbohydrates via glycolysis. This chain is Enolase, found in Nitrobacter hamburgensis (strain DSM 10229 / NCIMB 13809 / X14).